The primary structure comprises 163 residues: MFSMVTGFMNYSQQTIRAARYIGQSFVITLSHTNRLPITIQYPYEKSITSERFRGRIHFEFDKCIACEVCVRVCPIDLPVVDWRFERDIKKKQLLNYSIDFGVCIFCGNCVEYCPTNCLSMTEEYELSTSDRHEDYTIQTVMNSTQIKIDKDKPFDSRTITNY.

4Fe-4S ferredoxin-type domains are found at residues 55 to 84 (GRIHFEFDKCIACEVCVRVCPIDLPVVDWR) and 95 to 124 (LNYSIDFGVCIFCGNCVEYCPTNCLSMTEE). Positions 64, 67, 70, 74, 104, 107, 110, and 114 each coordinate [4Fe-4S] cluster.

It belongs to the complex I 23 kDa subunit family. In terms of assembly, NDH is composed of at least 16 different subunits, 5 of which are encoded in the nucleus. It depends on [4Fe-4S] cluster as a cofactor.

The protein resides in the plastid. It is found in the chloroplast thylakoid membrane. It carries out the reaction a plastoquinone + NADH + (n+1) H(+)(in) = a plastoquinol + NAD(+) + n H(+)(out). The enzyme catalyses a plastoquinone + NADPH + (n+1) H(+)(in) = a plastoquinol + NADP(+) + n H(+)(out). NDH shuttles electrons from NAD(P)H:plastoquinone, via FMN and iron-sulfur (Fe-S) centers, to quinones in the photosynthetic chain and possibly in a chloroplast respiratory chain. The immediate electron acceptor for the enzyme in this species is believed to be plastoquinone. Couples the redox reaction to proton translocation, and thus conserves the redox energy in a proton gradient. The sequence is that of NAD(P)H-quinone oxidoreductase subunit I, chloroplastic (ndhI) from Phoenix dactylifera (Date palm).